A 472-amino-acid polypeptide reads, in one-letter code: Glutamate--tRNA ligase 2 (472 aa).

A 'HIGH' region motif is present at residues 12 to 22; sequence PSPSGLLHLGN. A 'KMSKS' region motif is present at residues 253–257; the sequence is PLSKR. Lys256 is an ATP binding site.

It belongs to the class-I aminoacyl-tRNA synthetase family. Glutamate--tRNA ligase type 1 subfamily. As to quaternary structure, monomer.

The protein localises to the cytoplasm. It catalyses the reaction tRNA(Glu) + L-glutamate + ATP = L-glutamyl-tRNA(Glu) + AMP + diphosphate. Catalyzes the attachment of glutamate to tRNA(Glu) in a two-step reaction: glutamate is first activated by ATP to form Glu-AMP and then transferred to the acceptor end of tRNA(Glu). The sequence is that of Glutamate--tRNA ligase 2 from Nitrosococcus oceani (strain ATCC 19707 / BCRC 17464 / JCM 30415 / NCIMB 11848 / C-107).